The primary structure comprises 120 residues: Ribonuclease P protein component (120 aa).

Belongs to the RnpA family. Consists of a catalytic RNA component (M1 or rnpB) and a protein subunit.

It catalyses the reaction Endonucleolytic cleavage of RNA, removing 5'-extranucleotides from tRNA precursor.. Functionally, RNaseP catalyzes the removal of the 5'-leader sequence from pre-tRNA to produce the mature 5'-terminus. It can also cleave other RNA substrates such as 4.5S RNA. The protein component plays an auxiliary but essential role in vivo by binding to the 5'-leader sequence and broadening the substrate specificity of the ribozyme. In Mycobacterium marinum (strain ATCC BAA-535 / M), this protein is Ribonuclease P protein component.